An 801-amino-acid chain; its full sequence is Sucrose synthase isoform 2 (801 aa).

Residues 271–748 are GT-B glycosyltransferase; that stretch reads MIFNVVILSP…GLKRIQEKYT (478 aa).

This sequence belongs to the glycosyltransferase 1 family. Plant sucrose synthase subfamily. In terms of assembly, homotetramer. Exclusively expressed in flowers.

It carries out the reaction an NDP-alpha-D-glucose + D-fructose = a ribonucleoside 5'-diphosphate + sucrose + H(+). Its function is as follows. Sucrose-cleaving enzyme that provides UDP-glucose and fructose for various metabolic pathways. This Daucus carota (Wild carrot) protein is Sucrose synthase isoform 2.